A 94-amino-acid chain; its full sequence is CRISPR-associated endoribonuclease Cas2 (94 aa).

Residue Asp-11 participates in Mg(2+) binding.

It belongs to the CRISPR-associated endoribonuclease Cas2 protein family. As to quaternary structure, homodimer, forms a heterotetramer with a Cas1 homodimer. It depends on Mg(2+) as a cofactor.

Functionally, CRISPR (clustered regularly interspaced short palindromic repeat), is an adaptive immune system that provides protection against mobile genetic elements (viruses, transposable elements and conjugative plasmids). CRISPR clusters contain sequences complementary to antecedent mobile elements and target invading nucleic acids. CRISPR clusters are transcribed and processed into CRISPR RNA (crRNA). Functions as a ssRNA-specific endoribonuclease. Involved in the integration of spacer DNA into the CRISPR cassette. The polypeptide is CRISPR-associated endoribonuclease Cas2 (Thermus thermophilus (strain ATCC 27634 / DSM 579 / HB8)).